A 124-amino-acid polypeptide reads, in one-letter code: Large ribosomal subunit protein bL12 (124 aa).

This sequence belongs to the bacterial ribosomal protein bL12 family. In terms of assembly, homodimer. Part of the ribosomal stalk of the 50S ribosomal subunit. Forms a multimeric L10(L12)X complex, where L10 forms an elongated spine to which 2 to 4 L12 dimers bind in a sequential fashion. Binds GTP-bound translation factors.

Its function is as follows. Forms part of the ribosomal stalk which helps the ribosome interact with GTP-bound translation factors. Is thus essential for accurate translation. This Rickettsia akari (strain Hartford) protein is Large ribosomal subunit protein bL12.